The sequence spans 1544 residues: GATOR complex protein Iml1 (1544 aa).

Disordered regions lie at residues 615 to 649 (QAVP…CENG) and 1037 to 1072 (RRHS…EKRP). 2 stretches are compositionally biased toward polar residues: residues 623–639 (QAGQ…NNNN) and 1041–1057 (TSII…TNSP). The segment covering 1058–1072 (FRERVGSNRLPEKRP) has biased composition (basic and acidic residues).

The protein belongs to the IML1 family. As to quaternary structure, component of the GATOR complex consisting of mio, Nup44A/Seh1, Im11, Nplr3, Nplr2, Wdr24, Wdr59 and Sec13. Within the GATOR complex, probable component of the GATOR1 subcomplex which is likely composed of Iml1, Nplr2 and Nplr3.

Functionally, an essential component of the GATOR subcomplex GATOR1 which functions as an inhibitor of the amino acid-sensing branch of the TORC1 signaling pathway. The two GATOR subcomplexes, GATOR1 and GATOR2, regulate the TORC1 pathway in order to mediate metabolic homeostasis, female gametogenesis and the response to amino acid limitation and complete starvation. The function of GATOR1 in negatively regulating the TORC1 pathway is essential for maintaining baseline levels of TORC1 activity under nutrient rich conditions, and for promoting survival during amino acid or complete starvation by inhibiting TORC1-dependent cell growth and promoting catabolic metabolism and autophagy. GATOR1 and GATOR2 act at different stages of oogenesis to regulate TORC1 in order to control meiotic entry and promote oocyte growth and development. After exactly four mitotic cyst divisions, the GATOR1 complex members (Iml1, Nprl2 and Nprl3) down-regulate TORC1 to slow cellular metabolism and promote the mitotic/meiotic transition. At later stages of oogenesis, the mio and Nup44A components of the GATOR2 complex inhibit GATOR1 and thus activate TORC1 to promote meiotic progression, and drive oocyte growth and development. This is GATOR complex protein Iml1 from Drosophila melanogaster (Fruit fly).